The chain runs to 893 residues: Translation initiation factor IF-2 (893 aa).

Positions 1–266 are disordered; the sequence is MVDTKNPGDK…AKPAPSKQRG (266 aa). The span at 59–70 shows a compositional bias: low complexity; it reads PADAPTAAAAAP. Residues 71–92 show a composition bias toward pro residues; the sequence is APAPAPVPSAAPRPAAPPPPSR. The segment covering 93–104 has biased composition (low complexity); the sequence is PQQSRSQSPSRS. Basic and acidic residues-rich tracts occupy residues 128–148 and 155–196; these read ARVR…RRNS and AERE…EAKR. Positions 197–226 are enriched in low complexity; it reads PAAAATPAKSATPAARPTGAPAVRAPGVAA. The tr-type G domain occupies 389 to 560; sequence PRSPVVTVMG…ALQAELLDLK (172 aa). The interval 398–405 is G1; that stretch reads GHVDHGKT. Residue 398 to 405 coordinates GTP; it reads GHVDHGKT. The G2 stretch occupies residues 423-427; it reads GITQH. The interval 446-449 is G3; that stretch reads DTPG. Residues 446-450 and 500-503 each bind GTP; these read DTPGH and NKID. The G4 stretch occupies residues 500 to 503; it reads NKID. Residues 536–538 are G5; it reads SAK.

The protein belongs to the TRAFAC class translation factor GTPase superfamily. Classic translation factor GTPase family. IF-2 subfamily.

The protein resides in the cytoplasm. Its function is as follows. One of the essential components for the initiation of protein synthesis. Protects formylmethionyl-tRNA from spontaneous hydrolysis and promotes its binding to the 30S ribosomal subunits. Also involved in the hydrolysis of GTP during the formation of the 70S ribosomal complex. This is Translation initiation factor IF-2 from Rhodopseudomonas palustris (strain BisA53).